A 458-amino-acid polypeptide reads, in one-letter code: MDQSNRYARLDLKEADLIAGGRHVLCAYIMKPKAGYGYLETAAHFAAESSTGTNVEVSTTDDFTRGVDALVYEIDPEKEIMKIAYPVELFDRNIIDGGAMLCSFLTLTIGNNQGMGDVEYAKMHDFYVPPCYLRLFDGPSMNIADMWRVLGRPVVDGGMVVGTIIKPKLGLRPKPFADACYEFWLGGDFIKNDEPQGNQTFAPLKETIRLVADAMKRAQDETGEAKLFSANITADDHYEMVARGEYILETFGENADHVAFLVDGYVTGPAAITTARRSFPRQFLHYHRAGHGAVTSPQSMRGYTAFVLSKMSRLQGASGIHTGTMGYGKMEGDASDKIMAYMLNDEAAQGPFYHQDWLGMKATTPIISGGMNALRLPGFFDNLGHSNVIQTSGGGAFGHLDGATAGAKSLRQSCDAWKAGVDLVTYAKSHRELARAFESFPNDADKLYPGWRVALGVN.

Asn111 is a binding site for substrate. Lys166 functions as the Proton acceptor in the catalytic mechanism. Residue Lys168 coordinates substrate. Positions 191, 193, and 194 each coordinate Mg(2+). Lys191 is subject to N6-carboxylysine. His287 acts as the Proton acceptor in catalysis. Arg288, His321, and Ser368 together coordinate substrate.

This sequence belongs to the RuBisCO large chain family. Type II subfamily. In terms of assembly, homodimer. Mg(2+) is required as a cofactor.

The enzyme catalyses 2 (2R)-3-phosphoglycerate + 2 H(+) = D-ribulose 1,5-bisphosphate + CO2 + H2O. It carries out the reaction D-ribulose 1,5-bisphosphate + O2 = 2-phosphoglycolate + (2R)-3-phosphoglycerate + 2 H(+). In terms of biological role, ruBisCO catalyzes two reactions: the carboxylation of D-ribulose 1,5-bisphosphate, the primary event in carbon dioxide fixation, as well as the oxidative fragmentation of the pentose substrate. Both reactions occur simultaneously and in competition at the same active site. The protein is Ribulose bisphosphate carboxylase (cbbM) of Rhodobacter capsulatus (Rhodopseudomonas capsulata).